Here is a 309-residue protein sequence, read N- to C-terminus: Haloalkane dehalogenase (309 aa).

The region spanning 37–148 (PTVLFLHGNP…FERWEDFHQR (112 aa)) is the AB hydrolase-1 domain. Residue Asp-110 is the Nucleophile of the active site. The active-site Proton donor is the Glu-134. The active-site Proton acceptor is the His-278.

It belongs to the haloalkane dehalogenase family. Type 2 subfamily. As to quaternary structure, monomer.

It carries out the reaction 1-haloalkane + H2O = a halide anion + a primary alcohol + H(+). In terms of biological role, catalyzes hydrolytic cleavage of carbon-halogen bonds in halogenated aliphatic compounds, leading to the formation of the corresponding primary alcohols, halide ions and protons. In Mesorhizobium japonicum (strain LMG 29417 / CECT 9101 / MAFF 303099) (Mesorhizobium loti (strain MAFF 303099)), this protein is Haloalkane dehalogenase.